The primary structure comprises 341 residues: Tetraacyldisaccharide 4'-kinase (341 aa).

54-61 contributes to the ATP binding site; that stretch reads TVGGAGKT.

It belongs to the LpxK family.

The catalysed reaction is a lipid A disaccharide + ATP = a lipid IVA + ADP + H(+). It participates in glycolipid biosynthesis; lipid IV(A) biosynthesis; lipid IV(A) from (3R)-3-hydroxytetradecanoyl-[acyl-carrier-protein] and UDP-N-acetyl-alpha-D-glucosamine: step 6/6. Its function is as follows. Transfers the gamma-phosphate of ATP to the 4'-position of a tetraacyldisaccharide 1-phosphate intermediate (termed DS-1-P) to form tetraacyldisaccharide 1,4'-bis-phosphate (lipid IVA). This is Tetraacyldisaccharide 4'-kinase from Brucella melitensis biotype 2 (strain ATCC 23457).